Consider the following 513-residue polypeptide: Zinc finger CCCH-type with G patch domain-containing protein (513 aa).

The C3H1-type zinc finger occupies 155–178 (PCSYYLEGECRFDEAKCRFSHGAL). Composition is skewed to acidic residues over residues 252–261 (DQDEDDELSS) and 273–283 (SDEAESDMDDL). The segment at 252–283 (DQDEDDELSSEESTSSMRDASSDEAESDMDDL) is disordered. The 47-residue stretch at 312–358 (TRGIGSKLMEKMGYIHGTGLGSDGRGIVTPVSAQILPQGRSLDACME) folds into the G-patch domain. Residues 477–495 (QVQMQSHKQELATLQAQER) are compositionally biased toward polar residues. The disordered stretch occupies residues 477–513 (QVQMQSHKQELATLQAQERSLSKEQQTRKSKNKMFEF). Residues 496–513 (SLSKEQQTRKSKNKMFEF) are compositionally biased toward basic and acidic residues.

It localises to the nucleus. Its function is as follows. Transcription repressor. In Drosophila simulans (Fruit fly), this protein is Zinc finger CCCH-type with G patch domain-containing protein.